An 89-amino-acid polypeptide reads, in one-letter code: Elongation factor 1-beta (89 aa).

This sequence belongs to the EF-1-beta/EF-1-delta family.

Functionally, promotes the exchange of GDP for GTP in EF-1-alpha/GDP, thus allowing the regeneration of EF-1-alpha/GTP that could then be used to form the ternary complex EF-1-alpha/GTP/AAtRNA. In Methanococcus maripaludis (strain C6 / ATCC BAA-1332), this protein is Elongation factor 1-beta.